The primary structure comprises 154 residues: MPSRTARYARYSPRQRRRRMLADRSVRFPNDVLFLDHIRQGDLEQVGRFIRTRKVSLATIHPSGLAALHEAVLSGNLECVKLLVKYGADIHQRDEAGWTPLHIACSDGYPDIARYLISLGADRDATNDDGDLPSDLIDPDYKELVELFKGTTMD.

2 ANK repeats span residues S63 to Q92 and A96 to A125.

Interacts with DYSF and PPP1CA.

In terms of biological role, inhibits phosphatase activity of protein phosphatase 1 (PP1) complexes. The polypeptide is Protein phosphatase 1 regulatory subunit 27 (PPP1R27) (Homo sapiens (Human)).